Consider the following 84-residue polypeptide: Beta-cardiotoxin CTX15 (84 aa).

Positions 1 to 21 are cleaved as a signal peptide; the sequence is MKTLLLTLVVVTIVCLDLGYT. 4 disulfide bridges follow: Cys24/Cys43, Cys36/Cys61, Cys65/Cys76, and Cys77/Cys82.

It belongs to the three-finger toxin family. Short-chain subfamily. Aminergic toxin sub-subfamily. As to expression, expressed by the venom gland.

It is found in the secreted. Acts as a beta-blocker by binding to beta-1 and beta-2 adrenergic receptors (ADRB1 and ADRB2). It dose-dependently decreases the heart rate (bradycardia), whereas conventional cardiotoxins increases it. At 100 mg/kg, intraperitoneal injection into mice provokes labored breathing, impaired locomotion, lack of response to external stimuli, and death (after 30 minutes). This Ophiophagus hannah (King cobra) protein is Beta-cardiotoxin CTX15.